A 204-amino-acid chain; its full sequence is Probable GTP-binding protein EngB (204 aa).

Residues 1–21 (MKVSSAEFVTSGTRPAHYPPP) form a disordered region. The region spanning 22 to 194 (ELPEVAFAGR…WARIEVMLAA (173 aa)) is the EngB-type G domain. GTP is bound by residues 30 to 37 (GRSNVGKS), 57 to 61 (GRTQL), 75 to 78 (DLPG), 142 to 145 (TKCD), and 173 to 175 (FSA). Ser37 and Thr59 together coordinate Mg(2+).

It belongs to the TRAFAC class TrmE-Era-EngA-EngB-Septin-like GTPase superfamily. EngB GTPase family. Requires Mg(2+) as cofactor.

Its function is as follows. Necessary for normal cell division and for the maintenance of normal septation. The protein is Probable GTP-binding protein EngB of Geobacter metallireducens (strain ATCC 53774 / DSM 7210 / GS-15).